A 238-amino-acid chain; its full sequence is Large ribosomal subunit protein uL1 (238 aa).

It belongs to the universal ribosomal protein uL1 family. Part of the 50S ribosomal subunit.

Binds directly to 23S rRNA. The L1 stalk is quite mobile in the ribosome, and is involved in E site tRNA release. Functionally, protein L1 is also a translational repressor protein, it controls the translation of the L11 operon by binding to its mRNA. This is Large ribosomal subunit protein uL1 from Frankia casuarinae (strain DSM 45818 / CECT 9043 / HFP020203 / CcI3).